An 86-amino-acid polypeptide reads, in one-letter code: uncharacterized protein (86 aa).

This is an uncharacterized protein from Vaccinia virus (strain Copenhagen) (VACV).